A 445-amino-acid polypeptide reads, in one-letter code: Trigger factor (445 aa).

The PPIase FKBP-type domain occupies 168-253 (GDAVIVDFVG…IHEVRAPQTP (86 aa)).

The protein belongs to the FKBP-type PPIase family. Tig subfamily.

The protein resides in the cytoplasm. The catalysed reaction is [protein]-peptidylproline (omega=180) = [protein]-peptidylproline (omega=0). Its function is as follows. Involved in protein export. Acts as a chaperone by maintaining the newly synthesized protein in an open conformation. Functions as a peptidyl-prolyl cis-trans isomerase. The sequence is that of Trigger factor from Hyphomonas neptunium (strain ATCC 15444).